Here is a 140-residue protein sequence, read N- to C-terminus: Transcription antitermination protein NusB (140 aa).

The protein belongs to the NusB family.

Involved in transcription antitermination. Required for transcription of ribosomal RNA (rRNA) genes. Binds specifically to the boxA antiterminator sequence of the ribosomal RNA (rrn) operons. This Thermoanaerobacter pseudethanolicus (strain ATCC 33223 / 39E) (Clostridium thermohydrosulfuricum) protein is Transcription antitermination protein NusB.